The following is a 290-amino-acid chain: MRGFSGQPLSDDDNYRIEKTQRNTIPERLHFSRERNMPIASIFGTRGYFVFSSEQSYDKFKQTNFNISTLDADGVGVPLFHIVQSYNVIGKITRSSPDFYIYKYVLQGVQDPPLYSDCKVICQDKVFRLCKILYCEIYAHQGFFETKYDFFYPSKTQPVKKYQIIKQSNMRDLYSTLDGMRFRWHVKFYSDHFRLMFLDEDRLNYSNSNQKERQKPDQGKSKAPDFVIGHYTRTFSDILPRSTSKCSNLIIGEHSKPDSLGITTVPDLTQEFACQGALIHYLLHIERERK.

Its subcellular location is the cytoplasm. This is an uncharacterized protein from Saccharomyces cerevisiae (strain ATCC 204508 / S288c) (Baker's yeast).